The chain runs to 526 residues: ATP synthase subunit alpha (526 aa).

171 to 178 (GDRQTGKT) contributes to the ATP binding site.

Belongs to the ATPase alpha/beta chains family. As to quaternary structure, F-type ATPases have 2 components, CF(1) - the catalytic core - and CF(0) - the membrane proton channel. CF(1) has five subunits: alpha(3), beta(3), gamma(1), delta(1), epsilon(1). CF(0) has three main subunits: a(1), b(2) and c(9-12). The alpha and beta chains form an alternating ring which encloses part of the gamma chain. CF(1) is attached to CF(0) by a central stalk formed by the gamma and epsilon chains, while a peripheral stalk is formed by the delta and b chains.

Its subcellular location is the cell inner membrane. The enzyme catalyses ATP + H2O + 4 H(+)(in) = ADP + phosphate + 5 H(+)(out). Produces ATP from ADP in the presence of a proton gradient across the membrane. The alpha chain is a regulatory subunit. The polypeptide is ATP synthase subunit alpha (Cytophaga hutchinsonii (strain ATCC 33406 / DSM 1761 / CIP 103989 / NBRC 15051 / NCIMB 9469 / D465)).